The following is a 340-amino-acid chain: Short-chain dehydrogenase/reductase prx1 (340 aa).

Positions 60, 84, 104, 131, and 162 each coordinate NADP(+). Catalysis depends on serine 184, which acts as the Proton donor. The NADP(+) site is built by tyrosine 210 and lysine 214. Tyrosine 210 acts as the Proton acceptor in catalysis. Residue lysine 214 is the Lowers pKa of active site Tyr of the active site.

The protein belongs to the short-chain dehydrogenases/reductases (SDR) family.

Its pathway is sesquiterpene biosynthesis. Short-chain dehydrogenase/reductase; part of the gene cluster that mediates the biosynthesis of PR-toxin, a bicyclic sesquiterpene belonging to the eremophilane class and acting as a mycotoxin. The first step of the pathway is catalyzed by the aristolochene synthase which performs the cyclization of trans,trans-farnesyl diphosphate (FPP) to the bicyclic sesquiterpene aristolochene. Following the formation of aristolochene, the non-oxygenated aristolochene is converted to the trioxygenated intermediate eremofortin B, via 7-epi-neopetasone. This conversion appears to involve three enzymes, a hydroxysterol oxidase-like enzyme, the quinone-oxidase prx3 that forms the quinone-type-structure in the bicyclic nucleus of aristolochene with the C8-oxo group and the C-3 hydroxyl group, and the P450 monooxygenase ORF6 that introduces the epoxide at the double bond between carbons 1 and 2. No monoxy or dioxy-intermediates have been reported to be released to the broth, so these three early oxidative reactions may be coupled together. Eremofortin B is further oxidized by another P450 monooxygenase, that introduces a second epoxide between carbons 7 and 11 prior to acetylation to eremofortin A by the acetyltransferase ORF8. The second epoxidation may be performed by a second P450 monooxygenase. After the acetylation step, eremofortin A is converted to eremofortin C and then to PR-toxin. First the conversion of eremofortin A to eremofortin C proceeds by oxidation of the side chain of the molecule at C-12 and is catalyzed by the short-chain oxidoreductase prx1. The cytochrome P450 monooxygenase ORF6 is probably also involved in this step. The primary alcohol formed at C-12 is finally oxidized by the short-chain alcohol dehydrogenase prx4 that forms PR-toxin. The chain is Short-chain dehydrogenase/reductase prx1 from Penicillium roqueforti (strain FM164).